Here is a 175-residue protein sequence, read N- to C-terminus: MDIAIHHPWIRRPFFPFHSPSRLFDQFFGEHLLESDLFPTSTSLSPFYLRPPSFLRAPSWFDTGLSEMRLEKDRFSVNLDVKHFSPEELKVKVLGDVIEVHGKHEERQDEHGFISREFHRKYRVPADVDPLTITSSLSSDGVLTVNGPRKQVSGPERTIPITREEKPAVTAAPKK.

M1 is modified (N-acetylmethionine). The residue at position 19 (S19) is a Phosphoserine. S41 carries O-linked (GlcNAc) serine glycosylation. Phosphoserine occurs at positions 45 and 59. Residues 56–164 (RAPSWFDTGL…PERTIPITRE (109 aa)) enclose the sHSP domain. Residue H83 participates in Zn(2+) binding. K92 carries the N6-acetyllysine modification. 4 residues coordinate Zn(2+): H104, E106, H111, and H119. The disordered stretch occupies residues 142–175 (VLTVNGPRKQVSGPERTIPITREEKPAVTAAPKK). At K166 the chain carries N6-acetyllysine. T170 carries O-linked (GlcNAc) threonine glycosylation.

The protein belongs to the small heat shock protein (HSP20) family. In terms of assembly, heteromer composed of three CRYAA and one CRYAB subunits. Aggregates with homologous proteins, including the small heat shock protein HSPB1, to form large heteromeric complexes. Inter-subunit bridging via zinc ions enhances stability, which is crucial as there is no protein turn over in the lens. Interacts with HSPBAP1 and TTN/titin. Interacts with TMEM109; in the cellular response to DNA damage. Interacts with DES; binds rapidly during early stages of DES filament assembly and a reduced binding seen in the later stages. Interacts with TMED10; the interaction mediates the translocation from the cytoplasm into the ERGIC (endoplasmic reticulum-Golgi intermediate compartment) and thereby secretion. Interacts with ATP6V1A and with MTOR, forming a ternary complex.

Its subcellular location is the cytoplasm. The protein resides in the nucleus. It is found in the secreted. It localises to the lysosome. In terms of biological role, may contribute to the transparency and refractive index of the lens. Has chaperone-like activity, preventing aggregation of various proteins under a wide range of stress conditions. In lens epithelial cells, stabilizes the ATP6V1A protein, preventing its degradation by the proteasome. The sequence is that of Alpha-crystallin B chain (CRYAB) from Macaca fascicularis (Crab-eating macaque).